Reading from the N-terminus, the 424-residue chain is Phosphoribosylamine--glycine ligase (424 aa).

The 207-residue stretch at 107-313 (KTFMKKYGIP…FLETLLNFYE (207 aa)) folds into the ATP-grasp domain. An ATP-binding site is contributed by 133–194 (VEKVGAPIVV…EEFLEGEEAS (62 aa)). Residues Glu283 and Asn285 each contribute to the Mg(2+) site.

It belongs to the GARS family. It depends on Mg(2+) as a cofactor. The cofactor is Mn(2+).

It catalyses the reaction 5-phospho-beta-D-ribosylamine + glycine + ATP = N(1)-(5-phospho-beta-D-ribosyl)glycinamide + ADP + phosphate + H(+). Its pathway is purine metabolism; IMP biosynthesis via de novo pathway; N(1)-(5-phospho-D-ribosyl)glycinamide from 5-phospho-alpha-D-ribose 1-diphosphate: step 2/2. This is Phosphoribosylamine--glycine ligase from Aquifex aeolicus (strain VF5).